The following is a 1481-amino-acid chain: Cystic fibrosis transmembrane conductance regulator (1481 aa).

Topologically, residues 1–77 (MQRSPLEKAS…KLINALRRCF (77 aa)) are cytoplasmic. The chain crosses the membrane as a helical span at residues 78–98 (FWRFTFYGILLYLGEVTKAVQ). Residues 81–365 (FTFYGILLYL…WAVQTWYDSL (285 aa)) form the ABC transmembrane type-1 1 domain. Residues 99–122 (PLLLGRIIASYDPDNKTERSIAIY) lie on the Extracellular side of the membrane. Residues 123 to 146 (LGIGLCLLFIVRTLLLHPAIFGLH) form a helical membrane-spanning segment. Residues 147–195 (HIGMQMRIAMFSLIYKKTLKLSSRVLDKISIGQLVSLLSNNLNKFDEGL) lie on the Cytoplasmic side of the membrane. A helical transmembrane segment spans residues 196–216 (ALAHFVWIAPLQVALLMGLIW). Topologically, residues 217–222 (ELLQAS) are extracellular. The chain crosses the membrane as a helical span at residues 223-243 (AFCGLGFLIVLALFQAGLGRM). Topologically, residues 244–298 (MMKYRDQRAGKINERLVITSEMIENIQSVKAYCWEEAMEKIIENLRQTELKLTRK) are cytoplasmic. A helical membrane pass occupies residues 299–319 (AAYVRYFNSSAFFFSGFFVVF). Residues 320–339 (LSVLPYALIKGIVLRKIFTT) lie on the Extracellular side of the membrane. A helical membrane pass occupies residues 340-358 (ISFCIVLRMAVTRQFPWAV). Residues 359–858 (QTWYDSLGAI…YLRYITLHKS (500 aa)) lie on the Cytoplasmic side of the membrane. Residues W401, S434, 458–465 (GSTGAGKT), and Q493 each bind ATP. The 224-residue stretch at 423 to 646 (NGDDNLFFSN…RPDFSSKLMG (224 aa)) folds into the ABC transporter 1 domain. A lipid anchor (S-palmitoyl cysteine) is attached at C524. 2 positions are modified to phosphoserine: S549 and S660. Residues 654–831 (SSERRNSILT…EEINEEDLKE (178 aa)) are disordered R region. Residue S670 is modified to Phosphoserine; by PKA. The residue at position 686 (S686) is a Phosphoserine. A Glycyl lysine isopeptide (Lys-Gly) (interchain with G-Cter in ubiquitin) cross-link involves residue K688. 2 positions are modified to phosphoserine: S700 and S712. Phosphothreonine is present on T717. S737, S753, S768, S790, S795, and S813 each carry phosphoserine. A helical transmembrane segment spans residues 859–879 (LIFVLIWCLVIFLAEVAASLV). The 297-residue stretch at 859–1155 (LIFVLIWCLV…AVNSSIDVDS (297 aa)) folds into the ABC transmembrane type-1 2 domain. Residues 880-918 (VLWLLGNTPFQDKGNSTYSRNNSYAVIITNTSSYYVFYI) are Extracellular-facing. N-linked (GlcNAc...) asparagine glycans are attached at residues N894, N900, and N909. A discontinuously helical membrane pass occupies residues 919–939 (YVGVADTLLALGFFRGLPLVH). At 940–990 (TLITVSKMLHHKMLHSVLQAPMSTLNTLKAGGILNRFSKDIAILDDLLPLT) the chain is on the cytoplasmic side. The helical transmembrane segment at 991–1011 (IFDFIQLLLIVIGAIAVVSVL) threads the bilayer. Residues 1012–1013 (QP) lie on the Extracellular side of the membrane. A helical transmembrane segment spans residues 1014 to 1034 (YIFLATVPVIAAFILLRAYFL). At 1035-1095 (QTSQQLKQLE…TANWFLYLST (61 aa)) the chain is on the cytoplasmic side. A helical transmembrane segment spans residues 1096–1116 (LRWFQMRIEMIFVIFFIAVTF). At 1117–1130 (ISILTTGEGEGTVG) the chain is on the extracellular side. The chain crosses the membrane as a helical span at residues 1131-1151 (IILTLAMNIMSTLQWAVNSSI). The Cytoplasmic portion of the chain corresponds to 1152-1481 (DVDSLMRSVS…TEEEVQETRL (330 aa)). An ABC transporter 2 domain is found at 1211 to 1444 (MTIKDLTAKY…KSLFRQAISH (234 aa)). ATP-binding positions include Y1220 and 1245 to 1252 (GRTGSGKS). The tract at residues 1387 to 1481 (RALKQAFADC…TEEEVQETRL (95 aa)) is interaction with GORASP2. C1396 carries S-palmitoyl cysteine lipidation. A phosphoserine mark is found at S1445 and S1457. A disordered region spans residues 1453–1481 (HRNSSKYKSQPQIASLKEETEEEVQETRL). Acidic residues predominate over residues 1471 to 1481 (ETEEEVQETRL). The PDZ-binding motif lies at 1479-1481 (TRL).

The protein belongs to the ABC transporter superfamily. ABCC family. CFTR transporter (TC 3.A.1.202) subfamily. In terms of assembly, monomer; does not require oligomerization for channel activity. May form oligomers in the membrane. Interacts with SLC26A3, SLC26A6 and NHERF1. Interacts with SHANK2. Interacts with MYO6. Interacts (via C-terminus) with GOPC (via PDZ domain); this promotes CFTR internalization and thereby decreases channel activity. Interacts with SLC4A7 through NHERF1. Found in a complex with MYO5B and RAB11A. Interacts with ANO1. Interacts with SLC26A8. Interacts with AHCYL1; the interaction increases CFTR activity. Interacts with CSE1L. The core-glycosylated form interacts with GORASP2 (via PDZ GRASP-type 1 domain) in respone to ER stress. Interacts with MARCHF2; the interaction leads to CFTR ubiqtuitination and degradation. Interacts with ADGRG2. Post-translationally, N-glycosylated. In terms of processing, phosphorylated; cAMP treatment promotes phosphorylation and activates the channel. Dephosphorylation decreases the ATPase activity (in vitro). Phosphorylation at PKA sites activates the channel. Phosphorylation at PKC sites enhances the response to phosphorylation by PKA. Phosphorylated by AMPK; this inhibits channel activity. Ubiquitinated, leading to its degradation in the lysosome. Deubiquitination by USP10 in early endosomes enhances its endocytic recycling to the cell membrane. Ubiquitinated by RNF185 during ER stress. Ubiquitinated by MARCHF2.

It localises to the apical cell membrane. The protein resides in the early endosome membrane. Its subcellular location is the cell membrane. The protein localises to the recycling endosome membrane. It is found in the endoplasmic reticulum membrane. It localises to the nucleus. It carries out the reaction ATP + H2O + closed Cl(-) channel = ADP + phosphate + open Cl(-) channel.. The catalysed reaction is chloride(in) = chloride(out). The enzyme catalyses hydrogencarbonate(in) = hydrogencarbonate(out). It catalyses the reaction ATP + H2O = ADP + phosphate + H(+). Epithelial ion channel that plays an important role in the regulation of epithelial ion and water transport and fluid homeostasis. Mediates the transport of chloride ions across the cell membrane. Possesses an intrinsic ATPase activity and utilizes ATP to gate its channel; the passive flow of anions through the channel is gated by cycles of ATP binding and hydrolysis by the ATP-binding domains. The ion channel is also permeable to HCO(3)(-); selectivity depends on the extracellular chloride concentration. Exerts its function also by modulating the activity of other ion channels and transporters. Contributes to the regulation of the pH and the ion content of the epithelial fluid layer. Modulates the activity of the epithelial sodium channel (ENaC) complex, in part by regulating the cell surface expression of the ENaC complex. May regulate bicarbonate secretion and salvage in epithelial cells by regulating the transporter SLC4A7. Can inhibit the chloride channel activity of ANO1. Plays a role in the chloride and bicarbonate homeostasis during sperm epididymal maturation and capacitation. The protein is Cystic fibrosis transmembrane conductance regulator of Aotus nancymaae (Ma's night monkey).